Consider the following 306-residue polypeptide: Beta-lactamase (306 aa).

A signal peptide spans 1–34; that stretch reads MNVKRKATLKFGICIGLLCVSFTGFNSLFGSTHA. Catalysis depends on serine 89, which acts as the Acyl-ester intermediate. 251 to 253 is a substrate binding site; sequence KSG.

The protein belongs to the class-A beta-lactamase family.

The enzyme catalyses a beta-lactam + H2O = a substituted beta-amino acid. Functionally, this protein is a beta-lactamase with a substrate specificity for penicillins. The polypeptide is Beta-lactamase (penP) (Bacillus amyloliquefaciens (Bacillus velezensis)).